We begin with the raw amino-acid sequence, 64 residues long: Prokaryotic ubiquitin-like protein Pup (64 aa).

Positions 1-37 (MAQEQTKRGGGGGDDDDIAGSTAAGQERREKLTEETD) are disordered. Positions 21 to 58 (STAAGQERREKLTEETDDLLDEIDDVLEENAEDFVRAY) are ARC ATPase binding. Residues 23–52 (AAGQERREKLTEETDDLLDEIDDVLEENAE) adopt a coiled-coil conformation. Glutamine 64 is modified (deamidated glutamine). Glutamine 64 is covalently cross-linked (Isoglutamyl lysine isopeptide (Gln-Lys) (interchain with K-? in acceptor proteins)).

This sequence belongs to the prokaryotic ubiquitin-like protein family. As to quaternary structure, strongly interacts with the proteasome-associated ATPase ARC through a hydrophobic interface; the interacting region of Pup lies in its C-terminal half. There is one Pup binding site per ARC hexamer ring. Is modified by deamidation of its C-terminal glutamine to glutamate by the deamidase Dop, a prerequisite to the subsequent pupylation process.

The protein operates within protein degradation; proteasomal Pup-dependent pathway. In terms of biological role, protein modifier that is covalently attached to lysine residues of substrate proteins, thereby targeting them for proteasomal degradation. The tagging system is termed pupylation. The protein is Prokaryotic ubiquitin-like protein Pup of Mycobacterium tuberculosis (strain ATCC 25177 / H37Ra).